Consider the following 166-residue polypeptide: Peroxynitrite isomerase Rv2717c (166 aa).

The GXWXGXG signature appears at 28–34 (GTWRGQG). Positions 40 and 158 each coordinate heme b.

It belongs to the nitrobindin family. As to quaternary structure, homodimer. The cofactor is heme b.

Its subcellular location is the cytoplasm. It catalyses the reaction peroxynitrite = nitrate. It functions in the pathway nitrogen metabolism. Functionally, heme-binding protein able to scavenge peroxynitrite and to protect free L-tyrosine against peroxynitrite-mediated nitration, by acting as a peroxynitrite isomerase that converts peroxynitrite to nitrate. Therefore, this protein likely plays a role in peroxynitrite sensing and in the detoxification of reactive nitrogen and oxygen species (RNS and ROS, respectively). Is able to bind nitric oxide (NO) in vitro, but may act as a sensor of peroxynitrite levels in vivo. This chain is Peroxynitrite isomerase Rv2717c, found in Arabidopsis thaliana (Mouse-ear cress).